Here is a 102-residue protein sequence, read N- to C-terminus: Large ribosomal subunit protein uL24 (102 aa).

The protein belongs to the universal ribosomal protein uL24 family. Part of the 50S ribosomal subunit.

One of two assembly initiator proteins, it binds directly to the 5'-end of the 23S rRNA, where it nucleates assembly of the 50S subunit. Functionally, one of the proteins that surrounds the polypeptide exit tunnel on the outside of the subunit. In Paraburkholderia xenovorans (strain LB400), this protein is Large ribosomal subunit protein uL24.